The chain runs to 450 residues: 3-keto-steroid reductase erg27 (450 aa).

L25, T53, and K59 together coordinate NADP(+). Active-site proton donor residues include S215 and Y238. Y238, K242, and T296 together coordinate NADP(+). K242 (lowers pKa of active site Tyr) is an active-site residue.

The protein belongs to the short-chain dehydrogenases/reductases (SDR) family. ERG27 subfamily. In terms of assembly, heterotetramer of erg25, erg26, erg27 and erg28. Erg28 acts as a scaffold to tether erg27 and other 4,4-demethylation-related enzymes, forming a demethylation enzyme complex, in the endoplasmic reticulum.

Its subcellular location is the endoplasmic reticulum membrane. The protein resides in the lipid droplet. It functions in the pathway steroid metabolism; ergosterol biosynthesis. In terms of biological role, sterol-C4-methyl oxidase; part of the third module of ergosterol biosynthesis pathway that includes the late steps of the pathway. Erg27 is a catalytic component of the C-4 demethylation complex that catalyzes the conversion of 4,4-dimethylfecosterol into fecosterol via 4-methylfecosterol. The third module or late pathway involves the ergosterol synthesis itself through consecutive reactions that mainly occur in the endoplasmic reticulum (ER) membrane. Firstly, the squalene synthase erg9 catalyzes the condensation of 2 farnesyl pyrophosphate moieties to form squalene, which is the precursor of all steroids. Squalene synthase is crucial for balancing the incorporation of farnesyl diphosphate (FPP) into sterol and nonsterol isoprene synthesis. Secondly, squalene is converted into lanosterol by the consecutive action of the squalene epoxidase erg1 and the lanosterol synthase erg7. Then, the delta(24)-sterol C-methyltransferase erg6 methylates lanosterol at C-24 to produce eburicol. Eburicol is the substrate of the sterol 14-alpha demethylase encoded by cyp51A and cyp51B, to yield 4,4,24-trimethyl ergosta-8,14,24(28)-trienol. The C-14 reductase erg24 then reduces the C14=C15 double bond which leads to 4,4-dimethylfecosterol. A sequence of further demethylations at C-4, involving the C-4 demethylation complex containing the C-4 methylsterol oxidases erg25A or erg25B, the sterol-4-alpha-carboxylate 3-dehydrogenase erg26 and the 3-keto-steroid reductase erg27, leads to the production of fecosterol via 4-methylfecosterol. The C-8 sterol isomerase erg2 then catalyzes the reaction which results in unsaturation at C-7 in the B ring of sterols and thus converts fecosterol to episterol. The sterol-C5-desaturase erg3B then catalyzes the introduction of a C-5 double bond in the B ring to produce 5-dehydroepisterol. The 2 other sterol-C5-desaturases, erg3A and erg3C, seem to be less important in ergosterol biosynthesis. The C-22 sterol desaturase erg5 further converts 5-dehydroepisterol into ergosta-5,7,22,24(28)-tetraen-3beta-ol by forming the C-22(23) double bond in the sterol side chain. Finally, ergosta-5,7,22,24(28)-tetraen-3beta-ol is substrate of the C-24(28) sterol reductases erg4A and erg4B to produce ergosterol. Possible alternative sterol biosynthetic pathways might exist from fecosterol to ergosterol, depending on the activities of the erg3 isoforms. This is 3-keto-steroid reductase erg27 from Aspergillus fumigatus (strain ATCC MYA-4609 / CBS 101355 / FGSC A1100 / Af293) (Neosartorya fumigata).